We begin with the raw amino-acid sequence, 826 residues long: 1,4-alpha-glucan-branching enzyme 1, chloroplastic/amyloplastic (826 aa).

A chloroplast-targeting transit peptide spans 1–58 (ATTTTTTHNSKNKQYLAKQKPVELTLGYQNPNGCKVCSFGSKGSIYQKVSSGFKGVSV). Residue Asp-409 is the Nucleophile of the active site. Glu-464 functions as the Proton donor in the catalytic mechanism. A disordered region spans residues 782–813 (DTDVARIPDVSMESEDSNLDRIEDNSEDAVDA).

Belongs to the glycosyl hydrolase 13 family. GlgB subfamily. As to quaternary structure, monomer. As to expression, expressed in roots, leaves, stipules, pods and flowers.

Its subcellular location is the plastid. The protein resides in the chloroplast. It localises to the amyloplast. The catalysed reaction is Transfers a segment of a (1-&gt;4)-alpha-D-glucan chain to a primary hydroxy group in a similar glucan chain.. It functions in the pathway glycan biosynthesis; starch biosynthesis. Functionally, catalyzes the formation of the alpha-1,6-glucosidic linkages in starch by scission of a 1,4-alpha-linked oligosaccharide from growing alpha-1,4-glucan chains and the subsequent attachment of the oligosaccharide to the alpha-1,6 position. May preferentially transfer long chains during branching. This chain is 1,4-alpha-glucan-branching enzyme 1, chloroplastic/amyloplastic (SBEII), found in Pisum sativum (Garden pea).